The primary structure comprises 355 residues: Uroporphyrinogen decarboxylase (355 aa).

Substrate is bound by residues 27–31, Asp77, Tyr154, Thr209, and His328; that span reads RQAGR.

It belongs to the uroporphyrinogen decarboxylase family. As to quaternary structure, homodimer.

The protein localises to the cytoplasm. The catalysed reaction is uroporphyrinogen III + 4 H(+) = coproporphyrinogen III + 4 CO2. Its pathway is porphyrin-containing compound metabolism; protoporphyrin-IX biosynthesis; coproporphyrinogen-III from 5-aminolevulinate: step 4/4. In terms of biological role, catalyzes the decarboxylation of four acetate groups of uroporphyrinogen-III to yield coproporphyrinogen-III. The polypeptide is Uroporphyrinogen decarboxylase (Aliivibrio fischeri (strain ATCC 700601 / ES114) (Vibrio fischeri)).